A 695-amino-acid polypeptide reads, in one-letter code: MAETKIIYHMDEEETPYLVKLPVAPERVTLADFKNVLSNRPVHAYKFFFKSMDQDFGVVKEEIFDDNAKLPCFNGRVVSWLVLAEGAHSDAGSQGTDSHTDLPPPLERTGGIGDSRPPSFHPNVASSRDGMDNETGTESMVSHRRERARRRNREEAARTNGHPRGDRRRDVGLPPDSASTALSSELESSSFVDSDEDGSTSRLSSSTEQSTSSRLIRKHKRRRRKQRLRQADRASSFSSITDSTMSLNIVTVTLNMERHHFLGISIVGQSNDRGDGGIYIGSIMKGGAVAADGRIEPGDMLLQVNDVNFENMSNDDAVRVLREIVSQTGPISLTVAKCWDPTPRSYFTVPRADPVRPIDPAAWLSHTAALTGALPRYGTSPCSSAVTRTSSSSLTSSVPGAPQLEEAPLTVKSDMSAVVRVMQLPDSGLEIRDRMWLKITIANAVIGADVVDWLYTHVEGFKERREARKYASSLLKHGFLRHTVNKITFSEQCYYVFGDLCSNLATLNLNSGSSGTSDQDTLAPLPHPAAPWPLGQGYPYQYPGPPPCFPPAYQDPGFSYGSGSTGSQQSEGSKSSGSTRSSRRAPGREKERRAAGAGGSGSESDHTAPSGVGSSWRERPAGQLSRGSSPRSQASATAPGLPPPHPTTKAYTVVGGPPGGPPVRELAAVPPELTGSRQSFQKAMGNPCEFFVDIM.

A DIX domain is found at 1 to 85 (MAETKIIYHM…RVVSWLVLAE (85 aa)). The tract at residues 89-237 (SDAGSQGTDS…LRQADRASSF (149 aa)) is disordered. Over residues 142 to 151 (SHRRERARRR) the composition is skewed to basic residues. The span at 152–171 (NREEAARTNGHPRGDRRRDV) shows a compositional bias: basic and acidic residues. A compositionally biased stretch (low complexity) spans 176–192 (DSASTALSSELESSSFV). Phosphoserine is present on serine 194. Positions 200-214 (TSRLSSSTEQSTSSR) are enriched in low complexity. The span at 215–228 (LIRKHKRRRRKQRL) shows a compositional bias: basic residues. Residues 251–323 (TVTLNMERHH…NDDAVRVLRE (73 aa)) enclose the PDZ domain. The DEP domain occupies 425–499 (PDSGLEIRDR…SEQCYYVFGD (75 aa)). The segment at 543–667 (PGPPPCFPPA…PGGPPVRELA (125 aa)) is disordered. Residues 551 to 580 (PAYQDPGFSYGSGSTGSQQSEGSKSSGSTR) are compositionally biased toward low complexity. Over residues 625-636 (SRGSSPRSQASA) the composition is skewed to polar residues.

This sequence belongs to the DSH family. In terms of assembly, interacts with CXXC4. Interacts (via PDZ domain) with NXN. Interacts with BRD7 and INVS. Interacts (via PDZ domain) with VANGL1 and VANGL2 (via C-terminus). Interacts with ARRB1; the interaction is enhanced by phosphorylation of DVL1. Interacts with CYLD. Interacts (via PDZ domain) with RYK. Self-associates (via DIX domain) and forms higher homooligomers. Interacts (via PDZ domain) with DACT1 and FZD7, where DACT1 and FZD7 compete for the same binding site. Interacts (via DEP domain) with MUSK; the interaction is direct and mediates the formation a DVL1, MUSK and PAK1 ternary complex involved in AChR clustering. Interacts (via PDZ domain) with TMEM88. Interacts with DCDC2. Interacts with FOXK2. Interacts with PKD1 (via extracellular domain). Interacts (via PDZ domain) with CCDC88C/DAPLE; competes with CCDC88C for binding to frizzled receptor FZD7 and dissociates from CCDC88C following initiation of non-canonical Wnt signaling when CCDC88C displaces DVL1 from ligand-activated FZD7. In terms of processing, ubiquitinated; undergoes both 'Lys-48'-linked ubiquitination, leading to its subsequent degradation by the ubiquitin-proteasome pathway, and 'Lys-63'-linked ubiquitination. The interaction with INVS is required for ubiquitination. Deubiquitinated by CYLD, which acts on 'Lys-63'-linked ubiquitin chains.

It localises to the cell membrane. It is found in the cytoplasm. The protein resides in the cytosol. The protein localises to the cytoplasmic vesicle. In terms of biological role, participates in Wnt signaling by binding to the cytoplasmic C-terminus of frizzled family members and transducing the Wnt signal to down-stream effectors. Plays a role both in canonical and non-canonical Wnt signaling. Plays a role in the signal transduction pathways mediated by multiple Wnt genes. Required for LEF1 activation upon WNT1 and WNT3A signaling. DVL1 and PAK1 form a ternary complex with MUSK which is important for MUSK-dependent regulation of AChR clustering during the formation of the neuromuscular junction (NMJ). This Homo sapiens (Human) protein is Segment polarity protein dishevelled homolog DVL-1 (DVL1).